A 141-amino-acid polypeptide reads, in one-letter code: Large ribosomal subunit protein uL16 (141 aa).

Belongs to the universal ribosomal protein uL16 family. In terms of assembly, part of the 50S ribosomal subunit. Contacts the CTC protein (RL25).

In terms of biological role, binds the 5S and 23S rRNAs and is also seen to make contacts with the A and P site tRNAs. Interacts with A site tRNA mimics, and is probably one of the key factors, along with a helix of the 23S rRNA, in positioning tRNA stems in the peptidyl-transferase center. This is Large ribosomal subunit protein uL16 (rplP) from Deinococcus radiodurans (strain ATCC 13939 / DSM 20539 / JCM 16871 / CCUG 27074 / LMG 4051 / NBRC 15346 / NCIMB 9279 / VKM B-1422 / R1).